The primary structure comprises 291 residues: Cell division control protein 2 homolog 1 (291 aa).

One can recognise a Protein kinase domain in the interval 1–284; sequence GENVEKIGEG…ARSAVEHEYF (284 aa). ATP-binding positions include 7 to 15 and Lys-30; that span reads IGEGTYGVV. Thr-11 carries the post-translational modification Phosphothreonine. At Tyr-12 the chain carries Phosphotyrosine. Residue Asp-124 is the Proton acceptor of the active site. Thr-158 carries the post-translational modification Phosphothreonine; by CAK.

Belongs to the protein kinase superfamily. CMGC Ser/Thr protein kinase family. CDC2/CDKX subfamily. Found in most organs including root, young leaf, stem, vegetative meristem and flower bud.

The enzyme catalyses L-seryl-[protein] + ATP = O-phospho-L-seryl-[protein] + ADP + H(+). The catalysed reaction is L-threonyl-[protein] + ATP = O-phospho-L-threonyl-[protein] + ADP + H(+). It carries out the reaction [DNA-directed RNA polymerase] + ATP = phospho-[DNA-directed RNA polymerase] + ADP + H(+). With respect to regulation, phosphorylation at Thr-11 or Tyr-12 inactivates the enzyme, while phosphorylation at Thr-158 activates it. Plays a key role in the control of the eukaryotic cell cycle. Component of the kinase complex that phosphorylates the repetitive C-terminus of RNA polymerase II. This chain is Cell division control protein 2 homolog 1 (CDC2A), found in Medicago sativa (Alfalfa).